The sequence spans 373 residues: Arabinonate dehydratase (373 aa).

Residues aspartate 199, glutamate 225, and glutamate 251 each coordinate Mg(2+).

The protein belongs to the mandelate racemase/muconate lactonizing enzyme family. In terms of assembly, homooctamer. Requires Mg(2+) as cofactor.

It carries out the reaction D-arabinonate = 2-dehydro-3-deoxy-D-arabinonate + H2O. Inhibited by substrate levels above 8 mM. Its function is as follows. Catalyzes the dehydration of D-arabinonate to 2-keto-3-deoxy-D-arabinonate. Participates in a pentose oxidation pathway that converts D-arabinonate to 2-oxoglutarate. This Saccharolobus solfataricus (strain ATCC 35092 / DSM 1617 / JCM 11322 / P2) (Sulfolobus solfataricus) protein is Arabinonate dehydratase.